The chain runs to 354 residues: UDP-N-acetylglucosamine--N-acetylmuramyl-(pentapeptide) pyrophosphoryl-undecaprenol N-acetylglucosamine transferase (354 aa).

UDP-N-acetyl-alpha-D-glucosamine is bound by residues Thr-11–Gly-13, Arg-164, Ser-194, and Gln-289.

It belongs to the glycosyltransferase 28 family. MurG subfamily.

It is found in the cell membrane. It catalyses the reaction di-trans,octa-cis-undecaprenyl diphospho-N-acetyl-alpha-D-muramoyl-L-alanyl-D-glutamyl-meso-2,6-diaminopimeloyl-D-alanyl-D-alanine + UDP-N-acetyl-alpha-D-glucosamine = di-trans,octa-cis-undecaprenyl diphospho-[N-acetyl-alpha-D-glucosaminyl-(1-&gt;4)]-N-acetyl-alpha-D-muramoyl-L-alanyl-D-glutamyl-meso-2,6-diaminopimeloyl-D-alanyl-D-alanine + UDP + H(+). It functions in the pathway cell wall biogenesis; peptidoglycan biosynthesis. Its function is as follows. Cell wall formation. Catalyzes the transfer of a GlcNAc subunit on undecaprenyl-pyrophosphoryl-MurNAc-pentapeptide (lipid intermediate I) to form undecaprenyl-pyrophosphoryl-MurNAc-(pentapeptide)GlcNAc (lipid intermediate II). This is UDP-N-acetylglucosamine--N-acetylmuramyl-(pentapeptide) pyrophosphoryl-undecaprenol N-acetylglucosamine transferase from Clostridium botulinum (strain Langeland / NCTC 10281 / Type F).